Consider the following 288-residue polypeptide: Glandicoline B O-methyltransferase roqN (288 aa).

S-adenosyl-L-methionine-binding positions include Thr-57, Asp-82, and 109 to 110 (DA).

It belongs to the class I-like SAM-binding methyltransferase superfamily.

It carries out the reaction glandicoline B + S-adenosyl-L-methionine = meleagrin + S-adenosyl-L-homocysteine + H(+). It participates in alkaloid biosynthesis. Functionally, glandicoline B O-methyltransferase; part of the gene cluster that mediates the biosynthesis of the mycotoxin meleagrin. The first stage is catalyzed by the dipeptide synthase roqA which condenses histidine and tryptophan to produce histidyltryptophanyldiketopiperazine (HTD). HTD is then converted to roquefortine C through two possible pathways. In the first pathway, prenyltransferase roqD transforms HTD to the intermediate roquefortine D, which is in turn converted to roquefortine C by the cytochrome P450 monooxygenase roqR. In the second pathway, HTD is first converted to the intermediate dehydrohistidyltryptophanyldi-ketopiperazine (DHTD) by roqR which is then prenylated by roqD to form roquefortine C. Roquefortine C can be further transformed to meleagrin via three more reactions including oxydation to glandicolin A by roqM, which is further reduced to glandicoline B by roqO. Finally, glandicoline B is converted to meleagrin by the glandicoline B O-methyltransferase roqN. More studies identified further branching and additional metabolites produced by the roquefortine/meleagrin cluster, including roquefortine F, roquefortine L, roquefortine M, roquefortine N and neoxaline. The sequence is that of Glandicoline B O-methyltransferase roqN from Penicillium rubens (strain ATCC 28089 / DSM 1075 / NRRL 1951 / Wisconsin 54-1255) (Penicillium chrysogenum).